Consider the following 331-residue polypeptide: Phosphatidylinositol transfer protein 4 (331 aa).

Belongs to the PtdIns transfer protein family. PI transfer class IIA subfamily.

Catalyzes the transfer of PtdIns and phosphatidylcholine between membranes. The protein is Phosphatidylinositol transfer protein 4 (pitD) of Dictyostelium discoideum (Social amoeba).